We begin with the raw amino-acid sequence, 772 residues long: Ion-translocating oxidoreductase complex subunit C (772 aa).

4Fe-4S ferredoxin-type domains lie at 369–397 and 407–436; these read GEPQEEQSCIRCSACADACPADLLPQQLY and KATTHNIADCIECGACAWVCPSNIPLVQYF. The [4Fe-4S] cluster site is built by Cys377, Cys380, Cys383, Cys387, Cys416, Cys419, Cys422, and Cys426. Residues 599-748 are disordered; that stretch reads KARKLEQQQA…EPEEQVDPRK (150 aa).

The protein belongs to the 4Fe4S bacterial-type ferredoxin family. RnfC subfamily. As to quaternary structure, the complex is composed of six subunits: RsxA, RsxB, RsxC, RsxD, RsxE and RsxG. It depends on [4Fe-4S] cluster as a cofactor.

Its subcellular location is the cell inner membrane. Part of a membrane-bound complex that couples electron transfer with translocation of ions across the membrane. Required to maintain the reduced state of SoxR. The chain is Ion-translocating oxidoreductase complex subunit C from Shigella dysenteriae serotype 1 (strain Sd197).